A 1405-amino-acid chain; its full sequence is DNA-directed RNA polymerase subunit beta' (1405 aa).

Positions 70, 72, 85, and 88 each coordinate Zn(2+). Residues Asp-460, Asp-462, and Asp-464 each coordinate Mg(2+). Zn(2+) contacts are provided by Cys-815, Cys-890, Cys-897, and Cys-900.

It belongs to the RNA polymerase beta' chain family. In terms of assembly, the RNAP catalytic core consists of 2 alpha, 1 beta, 1 beta' and 1 omega subunit. When a sigma factor is associated with the core the holoenzyme is formed, which can initiate transcription. Requires Mg(2+) as cofactor. It depends on Zn(2+) as a cofactor.

It catalyses the reaction RNA(n) + a ribonucleoside 5'-triphosphate = RNA(n+1) + diphosphate. In terms of biological role, DNA-dependent RNA polymerase catalyzes the transcription of DNA into RNA using the four ribonucleoside triphosphates as substrates. This is DNA-directed RNA polymerase subunit beta' from Xanthomonas campestris pv. campestris (strain B100).